The following is a 185-amino-acid chain: Thymidine kinase (185 aa).

Gly8–Thr15 serves as a coordination point for ATP. Glu85 functions as the Proton acceptor in the catalytic mechanism. Residue Phe117 participates in substrate binding. Zn(2+) is bound by residues Cys142 and Cys145. Ile161–Gly165 is a binding site for substrate. Residues Cys174 and Cys177 each coordinate Zn(2+).

It belongs to the thymidine kinase family.

The enzyme catalyses thymidine + ATP = dTMP + ADP + H(+). This Choristoneura fumiferana entomopoxvirus (CfEPV) protein is Thymidine kinase (TK).